A 404-amino-acid polypeptide reads, in one-letter code: Cysteine desulfurase IscS (404 aa).

Residues 75–76 (AT), N155, Q183, and 203–205 (SGH) contribute to the pyridoxal 5'-phosphate site. K206 is modified (N6-(pyridoxal phosphate)lysine). Residue T243 coordinates pyridoxal 5'-phosphate. Catalysis depends on C328, which acts as the Cysteine persulfide intermediate. C328 serves as a coordination point for [2Fe-2S] cluster.

The protein belongs to the class-V pyridoxal-phosphate-dependent aminotransferase family. NifS/IscS subfamily. Homodimer. Forms a heterotetramer with IscU, interacts with other sulfur acceptors. Pyridoxal 5'-phosphate is required as a cofactor.

The protein localises to the cytoplasm. The enzyme catalyses (sulfur carrier)-H + L-cysteine = (sulfur carrier)-SH + L-alanine. The protein operates within cofactor biosynthesis; iron-sulfur cluster biosynthesis. Its function is as follows. Master enzyme that delivers sulfur to a number of partners involved in Fe-S cluster assembly, tRNA modification or cofactor biosynthesis. Catalyzes the removal of elemental sulfur atoms from cysteine to produce alanine. Functions as a sulfur delivery protein for Fe-S cluster synthesis onto IscU, an Fe-S scaffold assembly protein, as well as other S acceptor proteins. This Pectobacterium carotovorum subsp. carotovorum (strain PC1) protein is Cysteine desulfurase IscS.